A 144-amino-acid chain; its full sequence is 3-hydroxyacyl-[acyl-carrier-protein] dehydratase FabZ (144 aa).

His48 is a catalytic residue.

The protein belongs to the thioester dehydratase family. FabZ subfamily.

It localises to the cytoplasm. The enzyme catalyses a (3R)-hydroxyacyl-[ACP] = a (2E)-enoyl-[ACP] + H2O. Involved in unsaturated fatty acids biosynthesis. Catalyzes the dehydration of short chain beta-hydroxyacyl-ACPs and long chain saturated and unsaturated beta-hydroxyacyl-ACPs. This is 3-hydroxyacyl-[acyl-carrier-protein] dehydratase FabZ from Bacillus pumilus (strain SAFR-032).